We begin with the raw amino-acid sequence, 40 residues long: Photosystem II reaction center protein J (40 aa).

A helical membrane pass occupies residues 8-28 (IPLWLIGTVAGILVLGLLGIF).

Belongs to the PsbJ family. PSII is composed of 1 copy each of membrane proteins PsbA, PsbB, PsbC, PsbD, PsbE, PsbF, PsbH, PsbI, PsbJ, PsbK, PsbL, PsbM, PsbT, PsbX, PsbY, PsbZ, Psb30/Ycf12, at least 3 peripheral proteins of the oxygen-evolving complex and a large number of cofactors. It forms dimeric complexes.

It localises to the plastid. Its subcellular location is the chloroplast thylakoid membrane. Functionally, one of the components of the core complex of photosystem II (PSII). PSII is a light-driven water:plastoquinone oxidoreductase that uses light energy to abstract electrons from H(2)O, generating O(2) and a proton gradient subsequently used for ATP formation. It consists of a core antenna complex that captures photons, and an electron transfer chain that converts photonic excitation into a charge separation. In Physcomitrium patens (Spreading-leaved earth moss), this protein is Photosystem II reaction center protein J.